Reading from the N-terminus, the 467-residue chain is Uronate isomerase (467 aa).

This sequence belongs to the metallo-dependent hydrolases superfamily. Uronate isomerase family.

It carries out the reaction D-glucuronate = D-fructuronate. The catalysed reaction is aldehydo-D-galacturonate = keto-D-tagaturonate. The protein operates within carbohydrate metabolism; pentose and glucuronate interconversion. The polypeptide is Uronate isomerase (Flavobacterium johnsoniae (strain ATCC 17061 / DSM 2064 / JCM 8514 / BCRC 14874 / CCUG 350202 / NBRC 14942 / NCIMB 11054 / UW101) (Cytophaga johnsonae)).